The following is a 356-amino-acid chain: Neutral protease 2 homolog MEP5 (356 aa).

The first 19 residues, 1–19 (MRVSSSLIALAALAVQALA), serve as a signal peptide directing secretion. The propeptide occupies 20-179 (LPVNELAERD…ASAIPELDKR (160 aa)). Cystine bridges form between cysteine 187/cysteine 259 and cysteine 266/cysteine 284. Position 308 (histidine 308) interacts with Zn(2+). Glutamate 309 is an active-site residue. Residues histidine 312 and aspartate 323 each coordinate Zn(2+).

The protein belongs to the peptidase M35 family. The cofactor is Zn(2+).

Its subcellular location is the secreted. It carries out the reaction Preferential cleavage of bonds with hydrophobic residues in P1'. Also 3-Asn-|-Gln-4 and 8-Gly-|-Ser-9 bonds in insulin B chain.. Functionally, secreted metalloproteinase that allows assimilation of proteinaceous substrates. Shows high activities on basic nuclear substrates such as histone and protamine. May be involved in virulence. The protein is Neutral protease 2 homolog MEP5 (MEP5) of Coccidioides posadasii (strain C735) (Valley fever fungus).